We begin with the raw amino-acid sequence, 425 residues long: Probable proline--tRNA ligase, mitochondrial (425 aa).

It belongs to the class-II aminoacyl-tRNA synthetase family.

It localises to the mitochondrion. The catalysed reaction is tRNA(Pro) + L-proline + ATP = L-prolyl-tRNA(Pro) + AMP + diphosphate. The polypeptide is Probable proline--tRNA ligase, mitochondrial (Schizosaccharomyces pombe (strain 972 / ATCC 24843) (Fission yeast)).